The chain runs to 177 residues: Putative adenylate kinase (177 aa).

Residues G10, G12, K13, T14, and T15 each contribute to the ATP site. Residues 30 to 50 are NMP; that stretch reads SLRDYAIEKGIGEMKGDELEV. Residues 99-109 form an LID region; it reads ERGYSREKVGE. ATP is bound by residues R100 and K138.

Belongs to the adenylate kinase family. AK6 subfamily. In terms of assembly, interacts with uS11. Not a structural component of 40S pre-ribosomes, but transiently interacts with them by binding to uS11.

The enzyme catalyses AMP + ATP = 2 ADP. It carries out the reaction ATP + H2O = ADP + phosphate + H(+). Functionally, broad-specificity nucleoside monophosphate (NMP) kinase that catalyzes the reversible transfer of the terminal phosphate group between nucleoside triphosphates and monophosphates. Also has ATPase activity. Involved in the late maturation steps of the 30S ribosomal particles, specifically 16S rRNA maturation. While NMP activity is not required for ribosome maturation, ATPase activity is. Associates transiently with small ribosomal subunit protein uS11. ATP hydrolysis breaks the interaction with uS11. May temporarily remove uS11 from the ribosome to enable a conformational change of the ribosomal RNA that is needed for the final maturation step of the small ribosomal subunit. The chain is Putative adenylate kinase from Thermococcus gammatolerans (strain DSM 15229 / JCM 11827 / EJ3).